Here is a 165-residue protein sequence, read N- to C-terminus: Regulator of ribonuclease activity A (165 aa).

The protein belongs to the RraA family. Homotrimer. Binds to both RNA-binding sites in the C-terminal region of Rne and to RhlB.

It is found in the cytoplasm. In terms of biological role, globally modulates RNA abundance by binding to RNase E (Rne) and regulating its endonucleolytic activity. Can modulate Rne action in a substrate-dependent manner by altering the composition of the degradosome. Modulates RNA-binding and helicase activities of the degradosome. The chain is Regulator of ribonuclease activity A from Actinobacillus pleuropneumoniae serotype 5b (strain L20).